The following is a 591-amino-acid chain: NADH-quinone oxidoreductase subunit C/D (591 aa).

The tract at residues Met1 to Gln182 is NADH dehydrogenase I subunit C. An NADH dehydrogenase I subunit D region spans residues Asp206 to Arg591.

The protein in the N-terminal section; belongs to the complex I 30 kDa subunit family. In the C-terminal section; belongs to the complex I 49 kDa subunit family. As to quaternary structure, NDH-1 is composed of 13 different subunits. Subunits NuoB, CD, E, F, and G constitute the peripheral sector of the complex.

Its subcellular location is the cell inner membrane. It catalyses the reaction a quinone + NADH + 5 H(+)(in) = a quinol + NAD(+) + 4 H(+)(out). NDH-1 shuttles electrons from NADH, via FMN and iron-sulfur (Fe-S) centers, to quinones in the respiratory chain. The immediate electron acceptor for the enzyme in this species is believed to be ubiquinone. Couples the redox reaction to proton translocation (for every two electrons transferred, four hydrogen ions are translocated across the cytoplasmic membrane), and thus conserves the redox energy in a proton gradient. This is NADH-quinone oxidoreductase subunit C/D from Psychrobacter arcticus (strain DSM 17307 / VKM B-2377 / 273-4).